The sequence spans 191 residues: MARSAYSYMAMWYRKIGREVHERLMRKILIEWRKAPAIVRVERPFRLERARKLGYKAKQGVVVVRVRLMRGPFNRRRPDSGRRPKRMGVYGITAWKSWRQVAEERAARKHPNLEVLNSYWVADDGIYRYFEVILIDCNLPTIKNDPLYSGICGREVPRRRIIRRLRERQKKTIEYLKKTLLPRLKEAPSQQ.

It belongs to the eukaryotic ribosomal protein eL15 family.

The polypeptide is Large ribosomal subunit protein eL15 (rpl15e) (Pyrobaculum aerophilum (strain ATCC 51768 / DSM 7523 / JCM 9630 / CIP 104966 / NBRC 100827 / IM2)).